A 290-amino-acid polypeptide reads, in one-letter code: Probable 2-(5''-triphosphoribosyl)-3'-dephosphocoenzyme-A synthase (290 aa).

The protein belongs to the CitG/MdcB family.

The catalysed reaction is 3'-dephospho-CoA + ATP = 2'-(5''-triphospho-alpha-D-ribosyl)-3'-dephospho-CoA + adenine. In terms of biological role, involved in the formation of 2-(5''-phosphoribosyl)-3'-dephosphocoenzyme-A, the prosthetic group of the acyl-carrier protein of the malonate decarboxylase. This chain is Probable 2-(5''-triphosphoribosyl)-3'-dephosphocoenzyme-A synthase, found in Stutzerimonas stutzeri (strain A1501) (Pseudomonas stutzeri).